The sequence spans 320 residues: tRNA N6-adenosine threonylcarbamoyltransferase (320 aa).

Fe cation contacts are provided by histidine 113 and histidine 117. Substrate contacts are provided by residues 143 to 147 (VVSGG), aspartate 176, glycine 189, aspartate 193, and asparagine 281. Aspartate 305 lines the Fe cation pocket.

The protein belongs to the KAE1 / TsaD family. The cofactor is Fe(2+).

The protein resides in the cytoplasm. It carries out the reaction L-threonylcarbamoyladenylate + adenosine(37) in tRNA = N(6)-L-threonylcarbamoyladenosine(37) in tRNA + AMP + H(+). Functionally, required for the formation of a threonylcarbamoyl group on adenosine at position 37 (t(6)A37) in tRNAs that read codons beginning with adenine. Is involved in the transfer of the threonylcarbamoyl moiety of threonylcarbamoyl-AMP (TC-AMP) to the N6 group of A37, together with TsaE and TsaB. TsaD likely plays a direct catalytic role in this reaction. The protein is tRNA N6-adenosine threonylcarbamoyltransferase of Mycoplasmoides gallisepticum (strain R(low / passage 15 / clone 2)) (Mycoplasma gallisepticum).